Here is a 367-residue protein sequence, read N- to C-terminus: GTPase Obg (367 aa).

Residues 1-158 (MFIDNVELTV…VQIRLELKLI (158 aa)) enclose the Obg domain. An OBG-type G domain is found at 159–358 (ADVGLVGFPN…LKYALYDLVK (200 aa)). Residues 165–172 (GFPNVGKS), 190–194 (FTTLT), 212–215 (DIPG), 280–283 (TKID), and 339–341 (SAV) contribute to the GTP site. S172 and T192 together coordinate Mg(2+).

Belongs to the TRAFAC class OBG-HflX-like GTPase superfamily. OBG GTPase family. Monomer. Requires Mg(2+) as cofactor.

Its subcellular location is the cytoplasm. Its function is as follows. An essential GTPase which binds GTP, GDP and possibly (p)ppGpp with moderate affinity, with high nucleotide exchange rates and a fairly low GTP hydrolysis rate. Plays a role in control of the cell cycle, stress response, ribosome biogenesis and in those bacteria that undergo differentiation, in morphogenesis control. The polypeptide is GTPase Obg (Nitratiruptor sp. (strain SB155-2)).